A 533-amino-acid polypeptide reads, in one-letter code: Phosphatidylinositol 4-kinase gamma 8 (533 aa).

In terms of domain architecture, PI3K/PI4K catalytic spans 101-397 (GAQPLLLPSG…AVSGSDDDDD (297 aa)). Residues 107 to 113 (LPSGLGG) form a G-loop region. ATP is bound by residues 108–114 (PSGLGGA), lysine 129, and 210–213 (QRFV). Residues 243–251 (LNLDRHAGN) are catalytic loop. The interval 276-302 (PIDHGLCLPECLDDPYFEWLNWPQASV) is activation loop. Aspartate 278 is a binding site for ATP.

This sequence belongs to the PI3/PI4-kinase family. Type II PI4K subfamily.

The enzyme catalyses a 1,2-diacyl-sn-glycero-3-phospho-(1D-myo-inositol) + ATP = a 1,2-diacyl-sn-glycero-3-phospho-(1D-myo-inositol 4-phosphate) + ADP + H(+). In terms of biological role, the phosphorylation of phosphatidylinositol (PI) to PI4P is the first committed step in the generation of phosphatidylinositol 4,5-bisphosphate (PIP2), a precursor of the second messenger inositol 1,4,5-trisphosphate (InsP3). The polypeptide is Phosphatidylinositol 4-kinase gamma 8 (PI4KG8) (Arabidopsis thaliana (Mouse-ear cress)).